The chain runs to 31 residues: Cytochrome b6-f complex subunit 6 (31 aa).

A helical membrane pass occupies residues 4-24 (ITSYFGFLLAALTITSVLFIG).

It belongs to the PetL family. As to quaternary structure, the 4 large subunits of the cytochrome b6-f complex are cytochrome b6, subunit IV (17 kDa polypeptide, PetD), cytochrome f and the Rieske protein, while the 4 small subunits are PetG, PetL, PetM and PetN. The complex functions as a dimer.

The protein localises to the plastid. It is found in the chloroplast thylakoid membrane. Component of the cytochrome b6-f complex, which mediates electron transfer between photosystem II (PSII) and photosystem I (PSI), cyclic electron flow around PSI, and state transitions. PetL is important for photoautotrophic growth as well as for electron transfer efficiency and stability of the cytochrome b6-f complex. The polypeptide is Cytochrome b6-f complex subunit 6 (Nandina domestica (Heavenly bamboo)).